Reading from the N-terminus, the 540-residue chain is Phenylalanine--tRNA ligase beta subunit (540 aa).

The B5 domain occupies 268-343 (LQHKSIKITA…ITYGYNNLSP (76 aa)). Mg(2+) is bound by residues Asp-321, Asp-327, Glu-330, and Glu-331.

Belongs to the phenylalanyl-tRNA synthetase beta subunit family. Type 2 subfamily. In terms of assembly, tetramer of two alpha and two beta subunits. Mg(2+) serves as cofactor.

It localises to the cytoplasm. It carries out the reaction tRNA(Phe) + L-phenylalanine + ATP = L-phenylalanyl-tRNA(Phe) + AMP + diphosphate + H(+). This is Phenylalanine--tRNA ligase beta subunit from Sulfurisphaera tokodaii (strain DSM 16993 / JCM 10545 / NBRC 100140 / 7) (Sulfolobus tokodaii).